Reading from the N-terminus, the 234-residue chain is Cytochrome b (234 aa).

Transmembrane regions (helical) follow at residues 33–53 (FGSLLGLCLMIQILTGLFLAM), 77–98 (WLIRYLHANGASMFFICLYMHV), 113–133 (WNIGIILLFAVMATAFMGYVL), and 178–198 (FFAFHFILPFIIAALVMIHLL). 2 residues coordinate heme b: His83 and His97. Heme b is bound by residues His182 and His196. His201 contacts a ubiquinone. A helical membrane pass occupies residues 226–234 (IKDLLGFLV).

This sequence belongs to the cytochrome b family. As to quaternary structure, the cytochrome bc1 complex contains 11 subunits: 3 respiratory subunits (MT-CYB, CYC1 and UQCRFS1), 2 core proteins (UQCRC1 and UQCRC2) and 6 low-molecular weight proteins (UQCRH/QCR6, UQCRB/QCR7, UQCRQ/QCR8, UQCR10/QCR9, UQCR11/QCR10 and a cleavage product of UQCRFS1). This cytochrome bc1 complex then forms a dimer. Requires heme b as cofactor.

Its subcellular location is the mitochondrion inner membrane. Functionally, component of the ubiquinol-cytochrome c reductase complex (complex III or cytochrome b-c1 complex) that is part of the mitochondrial respiratory chain. The b-c1 complex mediates electron transfer from ubiquinol to cytochrome c. Contributes to the generation of a proton gradient across the mitochondrial membrane that is then used for ATP synthesis. The sequence is that of Cytochrome b (MT-CYB) from Lepus arcticus (Arctic hare).